The following is a 389-amino-acid chain: S-adenosylmethionine synthase (389 aa).

His15 contacts ATP. A Mg(2+)-binding site is contributed by Asp17. A K(+)-binding site is contributed by Glu43. L-methionine-binding residues include Glu56 and Gln99. Residues Gln99–Glu109 form a flexible loop region. Residues Asp166 to Lys168, Arg234 to Phe235, Asp243, Arg249 to Lys250, Ala266, and Lys270 each bind ATP. Position 243 (Asp243) interacts with L-methionine. Residue Lys274 participates in L-methionine binding.

This sequence belongs to the AdoMet synthase family. Homotetramer; dimer of dimers. Mg(2+) is required as a cofactor. Requires K(+) as cofactor.

The protein localises to the cytoplasm. The enzyme catalyses L-methionine + ATP + H2O = S-adenosyl-L-methionine + phosphate + diphosphate. It functions in the pathway amino-acid biosynthesis; S-adenosyl-L-methionine biosynthesis; S-adenosyl-L-methionine from L-methionine: step 1/1. In terms of biological role, catalyzes the formation of S-adenosylmethionine (AdoMet) from methionine and ATP. The overall synthetic reaction is composed of two sequential steps, AdoMet formation and the subsequent tripolyphosphate hydrolysis which occurs prior to release of AdoMet from the enzyme. The chain is S-adenosylmethionine synthase from Neisseria meningitidis serogroup C / serotype 2a (strain ATCC 700532 / DSM 15464 / FAM18).